Reading from the N-terminus, the 339-residue chain is Probable geranylgeranyl transferase type-2 subunit beta (339 aa).

PFTB repeat units follow at residues 24–65 (IDKH…YLLK), 72–113 (KNEV…IQYD), 120–161 (INSV…SLLK), 168–209 (CEKA…SILN), 216–257 (IDKL…SAID), and 264–306 (NDKL…SLMG). Residues 194–196 (HAG) and 236–248 (RPEK…YSWW) contribute to the geranylgeranyl diphosphate site. Positions 242, 244, and 294 each coordinate Zn(2+).

This sequence belongs to the protein prenyltransferase subunit beta family. Heterodimer of an alpha and a beta subunit. Zn(2+) serves as cofactor.

The catalysed reaction is geranylgeranyl diphosphate + L-cysteinyl-[protein] = S-geranylgeranyl-L-cysteinyl-[protein] + diphosphate. Catalyzes the transfer of a geranyl-geranyl moiety from geranyl-geranyl pyrophosphate to both cysteines in Rab proteins with an -XXCC, -XCXC and -CCXX C-terminal. In Dictyostelium discoideum (Social amoeba), this protein is Probable geranylgeranyl transferase type-2 subunit beta (rabggtb).